A 151-amino-acid polypeptide reads, in one-letter code: UPAR/Ly6 domain-containing protein crok (151 aa).

The N-terminal stretch at 1-23 (MKTLEKYILFAIVLCCLLQLGQA) is a signal peptide. Residues 24-128 (IKCWDCRSDN…KDGCNSAGIH (105 aa)) lie on the Lumenal side of the membrane. Cystine bridges form between Cys26-Cys68, Cys29-Cys37, Cys51-Cys85, Cys100-Cys114, and Cys116-Cys122. An N-linked (GlcNAc...) asparagine glycan is attached at Asn43. Residue Ser124 is the site of GPI-anchor amidated serine attachment. Positions 125–151 (AGIHRLGLMGVLTGTLLSVIVAHLLRQ) are cleaved as a propeptide — removed in mature form. A helical membrane pass occupies residues 129 to 149 (RLGLMGVLTGTLLSVIVAHLL). The Cytoplasmic segment spans residues 150–151 (RQ).

Belongs to the quiver family.

It is found in the vesicle. The protein resides in the membrane. The protein localises to the endomembrane system. In terms of biological role, required for septate junction assembly, possibly by organizing the preassembly and transport of septate junction proteins including dlg1/disks large 1 and Nrx-IV/Neurexin-IV. Involved in paracellular barrier functions of trachea, hindgut and salivary gland mediated by epithelial cell septate junctions. This is UPAR/Ly6 domain-containing protein crok from Drosophila melanogaster (Fruit fly).